The following is a 344-amino-acid chain: Interactor of constitutive active ROPs 1 (344 aa).

Disordered stretches follow at residues 1–74 (MPRP…ESQL), 92–139 (EAVK…KETD), 186–218 (HESL…DEMV), and 307–344 (FMDP…KGQK). Residues 19–29 (SSSSTSDSNHS) are compositionally biased toward low complexity. Positions 60-108 (QKKLGGRISDLESQLGQAQEELRLLKEQLANAEAVKKQAQDELHKKSKK) form a coiled coil. Composition is skewed to basic and acidic residues over residues 93 to 103 (AVKKQAQDELH), 114 to 139 (RVEE…KETD), and 186 to 195 (HESLGKENES). A coiled-coil region spans residues 145–273 (VEKIAVEEEE…EQWRKAADAA (129 aa)). Residues 196–211 (LKNQLSDSASEISNVK) show a composition bias toward polar residues.

This sequence belongs to the ICR family. Homooligomer. Interacts with ARAC3, ARAC4, ARAC8, ARAC11 and SEC3A, but not with ICR2 or EXO70A1. In terms of tissue distribution, expressed in mature and germinating pollen. Expressed throughout the embryo but not in the hypophysis and quiescent center (QC). In roots, absent from the QC and the stem cells.

It localises to the cell membrane. The protein resides in the nucleus. In terms of biological role, acts as a scaffold, mediating interaction of ROPs with different proteins. Required for primary and adventitious root maintenance, but not for their formation. Promotes the stabilization of ARAC11 on the plasma membrane of the pollen tube initiation site but not the activation of ARAC11. Regulates directionality of polar auxin transport, and is required for the formation of a stable auxin maximum and tip localized auxin gradient during embryogenesis, organogenesis, and meristem activity. Involved in exocytosis and in the recycling of PIN proteins back to the plasma membrane. The sequence is that of Interactor of constitutive active ROPs 1 (ICR1) from Arabidopsis thaliana (Mouse-ear cress).